Reading from the N-terminus, the 156-residue chain is 3-hydroxyacyl-[acyl-carrier-protein] dehydratase FabZ (156 aa).

Histidine 50 is a catalytic residue.

Belongs to the thioester dehydratase family. FabZ subfamily.

It is found in the cytoplasm. It catalyses the reaction a (3R)-hydroxyacyl-[ACP] = a (2E)-enoyl-[ACP] + H2O. Its function is as follows. Involved in unsaturated fatty acids biosynthesis. Catalyzes the dehydration of short chain beta-hydroxyacyl-ACPs and long chain saturated and unsaturated beta-hydroxyacyl-ACPs. The protein is 3-hydroxyacyl-[acyl-carrier-protein] dehydratase FabZ of Janthinobacterium sp. (strain Marseille) (Minibacterium massiliensis).